The sequence spans 123 residues: Putative hypoxanthine phosphoribosyltransferase (123 aa).

In terms of biological role, may play a role in purine salvage. This is Putative hypoxanthine phosphoribosyltransferase from Methanosarcina mazei (strain ATCC BAA-159 / DSM 3647 / Goe1 / Go1 / JCM 11833 / OCM 88) (Methanosarcina frisia).